A 160-amino-acid chain; its full sequence is Ribosomal RNA large subunit methyltransferase H (160 aa).

Residues leucine 76 and glycine 108 each coordinate S-adenosyl-L-methionine.

It belongs to the RNA methyltransferase RlmH family. Homodimer.

It localises to the cytoplasm. It carries out the reaction pseudouridine(1915) in 23S rRNA + S-adenosyl-L-methionine = N(3)-methylpseudouridine(1915) in 23S rRNA + S-adenosyl-L-homocysteine + H(+). Functionally, specifically methylates the pseudouridine at position 1915 (m3Psi1915) in 23S rRNA. The polypeptide is Ribosomal RNA large subunit methyltransferase H (Rhodopseudomonas palustris (strain HaA2)).